The chain runs to 1638 residues: Chromatin-remodeling ATPase INO80 (1638 aa).

The segment at 41–93 (SLRKPLSSDEETDDEHVVKREHDVQDSDDSSTVGVVRMKQSSKRKSRLLASKE) is disordered. Phosphoserine occurs at positions 47 and 48. Thr52 carries the post-translational modification Phosphothreonine. A compositionally biased stretch (basic and acidic residues) spans 55–65 (EHVVKREHDVQ). 2 positions are modified to phosphoserine: Ser67 and Ser70. Positions 136-161 (VQQLLREHVREQRQRKNYYKKAANAQ) form a coiled coil. A disordered region spans residues 201–259 (RLAEAQAGPKPPKQRRRGRKKRDNMGSPESGEVPPSELGKYTFGDTLPNNEDDDEDGGE). Residues 212–222 (PKQRRRGRKKR) are compositionally biased toward basic residues. Phosphoserine is present on residues Ser227 and Ser230. Acidic residues predominate over residues 250 to 259 (NEDDDEDGGE). Residues 313–438 (IWQIMSKKES…AHFMSKKLGQ (126 aa)) form the DBINO domain. A disordered region spans residues 499 to 528 (KEKEEEEQAQESVEDIKPEPRPEMKDLPQP). Residues 502-511 (EEEEQAQESV) show a composition bias toward acidic residues. Residues 512 to 526 (EDIKPEPRPEMKDLP) are compositionally biased toward basic and acidic residues. Residues 547–718 (ANIYDQGISG…WALLHFIMPT (172 aa)) enclose the Helicase ATP-binding domain. 560 to 567 (DEMGLGKT) is an ATP binding site. A Helicase C-terminal domain is found at 1160-1315 (VLDNLLTRLK…GGNFKPDTLK (156 aa)). 2 disordered regions span residues 1335–1364 (QEAK…DVNM) and 1463–1638 (FLDD…VGPE). Polar residues predominate over residues 1338 to 1350 (KLQSSSPIPAATQ). A compositionally biased stretch (basic residues) spans 1473 to 1495 (MRRRHHPRGTRRGRPRGSTRRGG). Low complexity-rich tracts occupy residues 1505-1534 (TPTQ…GTSS) and 1618-1627 (SPATSRAPSP).

It belongs to the SNF2/RAD54 helicase family. As to quaternary structure, component of the chromatin remodeling Ino80 complex.

Its subcellular location is the nucleus. It catalyses the reaction ATP + H2O = ADP + phosphate + H(+). ATPase component of the chromatin remodeling INO80 complex which is involved in transcriptional regulation, DNA replication and DNA repair. Binds DNA. As part of the INO80 complex, remodels chromatin by shifting nucleosomes. The chain is Chromatin-remodeling ATPase INO80 from Drosophila melanogaster (Fruit fly).